The chain runs to 319 residues: ADP-L-glycero-D-manno-heptose-6-epimerase (319 aa).

Residues Phe-10–Ile-11, Asp-31–Asp-32, Lys-38, Lys-53, and Glu-75–Ser-79 contribute to the NADP(+) site. Residue Tyr-139 is the Proton acceptor of the active site. Position 143 (Lys-143) interacts with NADP(+). A substrate-binding site is contributed by Asn-168. Positions 169 and 177 each coordinate NADP(+). Lys-177 acts as the Proton acceptor in catalysis. Residues Ser-179, His-186, Phe-200–Ala-203, Arg-213, and Tyr-281 contribute to the substrate site.

It belongs to the NAD(P)-dependent epimerase/dehydratase family. HldD subfamily. In terms of assembly, homopentamer. It depends on NADP(+) as a cofactor.

It carries out the reaction ADP-D-glycero-beta-D-manno-heptose = ADP-L-glycero-beta-D-manno-heptose. The protein operates within nucleotide-sugar biosynthesis; ADP-L-glycero-beta-D-manno-heptose biosynthesis; ADP-L-glycero-beta-D-manno-heptose from D-glycero-beta-D-manno-heptose 7-phosphate: step 4/4. In terms of biological role, catalyzes the interconversion between ADP-D-glycero-beta-D-manno-heptose and ADP-L-glycero-beta-D-manno-heptose via an epimerization at carbon 6 of the heptose. The polypeptide is ADP-L-glycero-D-manno-heptose-6-epimerase (Aromatoleum aromaticum (strain DSM 19018 / LMG 30748 / EbN1) (Azoarcus sp. (strain EbN1))).